We begin with the raw amino-acid sequence, 72 residues long: Translation initiation factor IF-1 (72 aa).

The S1-like domain maps to 1 to 72 (MAKDNVIEIE…SKGRITYRFK (72 aa)).

It belongs to the IF-1 family. In terms of assembly, component of the 30S ribosomal translation pre-initiation complex which assembles on the 30S ribosome in the order IF-2 and IF-3, IF-1 and N-formylmethionyl-tRNA(fMet); mRNA recruitment can occur at any time during PIC assembly.

The protein resides in the cytoplasm. One of the essential components for the initiation of protein synthesis. Stabilizes the binding of IF-2 and IF-3 on the 30S subunit to which N-formylmethionyl-tRNA(fMet) subsequently binds. Helps modulate mRNA selection, yielding the 30S pre-initiation complex (PIC). Upon addition of the 50S ribosomal subunit IF-1, IF-2 and IF-3 are released leaving the mature 70S translation initiation complex. The chain is Translation initiation factor IF-1 from Pediococcus pentosaceus (strain ATCC 25745 / CCUG 21536 / LMG 10740 / 183-1w).